The sequence spans 98 residues: Cobalt transport protein CbiN (98 aa).

2 consecutive transmembrane segments (helical) span residues 6–26 (VLMI…YSGL) and 68–88 (SLLF…FFGY).

This sequence belongs to the CbiN family. Forms an energy-coupling factor (ECF) transporter complex composed of an ATP-binding protein (A component, CbiO), a transmembrane protein (T component, CbiQ) and 2 possible substrate-capture proteins (S components, CbiM and CbiN) of unknown stoichimetry.

It localises to the cell membrane. The protein operates within cofactor biosynthesis; adenosylcobalamin biosynthesis. Functionally, part of the energy-coupling factor (ECF) transporter complex CbiMNOQ involved in cobalt import. This is Cobalt transport protein CbiN from Methanococcus maripaludis (strain DSM 14266 / JCM 13030 / NBRC 101832 / S2 / LL).